The primary structure comprises 498 residues: Probable cytosol aminopeptidase (498 aa).

The Mn(2+) site is built by Lys-269 and Asp-274. Residue Lys-281 is part of the active site. Positions 292, 351, and 353 each coordinate Mn(2+). Residue Arg-355 is part of the active site.

It belongs to the peptidase M17 family. It depends on Mn(2+) as a cofactor.

It localises to the cytoplasm. The enzyme catalyses Release of an N-terminal amino acid, Xaa-|-Yaa-, in which Xaa is preferably Leu, but may be other amino acids including Pro although not Arg or Lys, and Yaa may be Pro. Amino acid amides and methyl esters are also readily hydrolyzed, but rates on arylamides are exceedingly low.. It catalyses the reaction Release of an N-terminal amino acid, preferentially leucine, but not glutamic or aspartic acids.. Presumably involved in the processing and regular turnover of intracellular proteins. Catalyzes the removal of unsubstituted N-terminal amino acids from various peptides. This is Probable cytosol aminopeptidase from Glaesserella parasuis serovar 5 (strain SH0165) (Haemophilus parasuis).